Consider the following 369-residue polypeptide: Phenylalanine--tRNA ligase alpha subunit (369 aa).

Glu269 is a binding site for Mg(2+).

This sequence belongs to the class-II aminoacyl-tRNA synthetase family. Phe-tRNA synthetase alpha subunit type 1 subfamily. Tetramer of two alpha and two beta subunits. Requires Mg(2+) as cofactor.

The protein localises to the cytoplasm. The catalysed reaction is tRNA(Phe) + L-phenylalanine + ATP = L-phenylalanyl-tRNA(Phe) + AMP + diphosphate + H(+). This is Phenylalanine--tRNA ligase alpha subunit from Brucella canis (strain ATCC 23365 / NCTC 10854 / RM-666).